The sequence spans 219 residues: Transmembrane emp24 domain-containing protein 10 (219 aa).

The N-terminal stretch at 1 to 31 (MSGLSGPPARRGPFPLALLLLFLLGPRLVLA) is a signal peptide. The segment at 1 to 142 (MSGLSGPPAR…KNYEEIAKVE (142 aa)) is required for interaction with STX17. The Lumenal segment spans residues 32-185 (ISFHLPINSR…RDTNESTNTR (154 aa)). The GOLD domain maps to 41–193 (RKCLREEIHK…TRVLYFSIFS (153 aa)). The segment at 147 to 178 (LEVELRRLEDLSESIVNDFAYMKKREEEMRDT) is required for TMED10 and TMED2 cis-Golgi network localization. 2 positions are modified to dimethylated arginine: arginine 171 and arginine 176. The N-linked (GlcNAc...) asparagine glycan is linked to asparagine 179. The helical transmembrane segment at 186 to 206 (VLYFSIFSMFCLIGLATWQVF) threads the bilayer. The segment at 204-219 (QVFYLRRFFKAKKLIE) is interaction with COPG1. Residues 207–219 (YLRRFFKAKKLIE) lie on the Cytoplasmic side of the membrane. Residues 207-219 (YLRRFFKAKKLIE) are interaction with ARF1 and IL1B. The COPII vesicle coat-binding motif lies at 211-212 (FF). Positions 211–219 (FFKAKKLIE) match the COPI vesicle coat-binding motif.

Belongs to the EMP24/GP25L family. In terms of assembly, predominantly dimeric and to a lesser extent monomeric in the ER. Monomer and dimer in ERGIC and cis-Golgi network. Forms homooligomer (via GOLD domain); the assembly is promoted by direct binding with leaderless cargos and may form a protein channel that facilitates cargo entry into the ERGIC. Forms heterooligomeric complexes with other members of the p24 family such as TMED2, TMED7 and TMED9. Interacts (via GOLD domain) with TMED2 (via GOLD domain); the complex is required for export of TMED10 from the ER to the cis-Golgi network; the complex is proposed to be involved in cis-Golgi network dynamics and / or biogenesis. Associates with the COPI vesicle coat subunits (coatomer). Tetramerization of the cytoplasmic domain at the Golgi membrane in vitro; the complex is proposed to interact with COPI coatomer and induce budding of the vesicles. Interacts with COPG1; the interaction involves TMED10 homodimer. Interacts with ARF1 (GDP-bound); the interaction probably involves a TMED10 oligomer. Interacts with SEC23A, SEC24B, SEC24C and SEC24D components of the coat protein complex II/COPII, indicative of an association of TMED10 with the COPII vesicle coat. Interacts with CD59. Interacts with MPPE1/PGAP5; the complex might recruit and sort GPI-anchored proteins to the ER-exit site, or the interaction might lead to recycling of PGAP5 between the ER and the Golgi. Interacts with F2LR1/PAR2. Interacts with KDELR2/ERD2; the interaction is disrupted by KDELR2 ligand. Found in a complex composed at least of SURF4, TMED2 and TMED10. Associates with the presenilin-dependent gamma-secretase complex. Interacts with STX17; the interaction is direct. Interacts with IL-1; the interaction is direct. Interacts with RAB21 (active GTP-bound form); the interaction is indirect and regulates TMED10 abundance and localization at the Golgi.

Its subcellular location is the endoplasmic reticulum membrane. It localises to the endoplasmic reticulum-Golgi intermediate compartment membrane. The protein resides in the golgi apparatus membrane. The protein localises to the golgi apparatus. It is found in the cis-Golgi network membrane. Its subcellular location is the trans-Golgi network membrane. It localises to the cytoplasmic vesicle. The protein resides in the secretory vesicle membrane. The protein localises to the cell membrane. It is found in the melanosome. Its function is as follows. Cargo receptor involved in protein vesicular trafficking and quality control in the endoplasmic reticulum (ER) and Golgi. The p24 protein family is a group of transmembrane proteins that bind coat protein complex I/COPI and coat protein complex II/COPII involved in vesicular trafficking between the membranes. Acts at the lumenal side for incorporation of secretory cargo molecules into transport vesicles and involved in vesicle coat formation at the cytoplasmic side. Mainly functions in the early secretory pathway and cycles between the ER, ER-Golgi intermediate compartment (ERGIC) and Golgi, mediating cargo transport through COPI and COPII-coated vesicles. In COPII vesicle-mediated anterograde transport, involved in the transport of GPI-anchored proteins by acting together with TMED2 as their cargo receptor; the function specifically implies SEC24C and SEC24D of the COPII vesicle coat and lipid raft-like microdomains of the ER. Recognizes GPI anchors structural remodeled in the ER by the GPI inositol-deacylase/PGAP1 and the metallophosphoesterase MPPE1/PGAP5. In COPI vesicle-mediated retrograde transport, involved in the biogenesis of COPI vesicles and vesicle coat recruitment. Involved in trafficking of amyloid beta A4 protein and soluble APP-beta release (independent from the modulation of gamma-secretase activity). Involved in the KDELR2-mediated retrograde transport of the toxin A subunit (CTX-A-K63)together with COPI and the COOH terminus of KDELR2. On Golgi membranes, acts as a primary receptor for ARF1-GDP, a GTP-binding protein involved in COPI-vesicle formation. Increases coatomer-dependent GTPase-activating activity of ARFGAP2 which mediates the hydrolysis of ARF1-bound GTP and therefore modulates protein trafficking from the Golgi apparatus. Involved in the exocytic trafficking of G protein-coupled receptors F2LR1/PAR2 (trypsin and tryspin-like enzyme receptor), OPRM1 (opioid receptor) and P2RY4 (UTD and UDP receptor) from the Golgi to the plasma membrane, thus contributing to receptor resensitization. In addition to its cargo receptor activity, may also act as a protein channel after oligomerization, facilitating the post-translational entry of leaderless cytoplasmic cargo into the ERGIC. Involved in the translocation into ERGIC, the vesicle entry and the secretion of leaderless cargos (lacking the secretion signal sequence), including the mature form of interleukin 1/IL-1 family members, the alpha-crystallin B chain HSPB5, the carbohydrate-binding proteins galectin-1/LGALS1 and galectin-3/LGALS3, the microtubule-associated protein Tau/MAPT, and the annexin A1/ANXA1; the translocation process is dependent on cargo protein unfolding and enhanced by chaperones HSP90AB1 and HSP90B1/GRP9. Could also associates with the presenilin-dependent gamma-secretase complex in order to regulate gamma-cleavages of the amyloid beta A4 protein to yield amyloid-beta 40/Abeta40. This chain is Transmembrane emp24 domain-containing protein 10, found in Homo sapiens (Human).